The following is a 125-amino-acid chain: Temptin (125 aa).

The first 22 residues, M1–A22, serve as a signal peptide directing secretion. Disulfide bonds link C40/C125 and C79/C99. The segment at L78–C125 is disordered. Residues Q103–L113 are compositionally biased toward polar residues.

As to quaternary structure, binds to attractin and enticin. Produced by the albumen gland of the egg cordons.

The protein resides in the secreted. In terms of biological role, a component of the complex of water-borne protein pheromones that stimulates attraction and mating behavior. Modulates pheromone signaling by direct binding to attractin. The sequence is that of Temptin from Aplysia californica (California sea hare).